A 64-amino-acid polypeptide reads, in one-letter code: Large ribosomal subunit protein bL28 (64 aa).

It belongs to the bacterial ribosomal protein bL28 family.

This chain is Large ribosomal subunit protein bL28, found in Bifidobacterium adolescentis (strain ATCC 15703 / DSM 20083 / NCTC 11814 / E194a).